The chain runs to 127 residues: Histone H2B type 1-A (127 aa).

P2 bears the N-acetylproline mark. Residues K7, K13, K14, K17, K18, K22, and K25 each carry the N6-acetyllysine; alternate modification. 8 positions are modified to N6-crotonyllysine; alternate: K7, K13, K14, K17, K18, K22, K25, and K36. N6-lactoyllysine; alternate is present on residues K7 and K13. K7 is covalently cross-linked (Glycyl lysine isopeptide (Lys-Gly) (interchain with G-Cter in SUMO2); alternate). An N6-lactoyllysine; alternate mark is found at K17, K18, K22, and K25. K22 participates in a covalent cross-link: Glycyl lysine isopeptide (Lys-Gly) (interchain with G-Cter in SUMO2); alternate. K36 is subject to N6-succinyllysine; alternate. K36 participates in a covalent cross-link: Glycyl lysine isopeptide (Lys-Gly) (interchain with G-Cter in ubiquitin); alternate. S38 is subject to Phosphoserine. Position 45 is an N6-lactoyllysine; alternate (K45). N6-methyllysine is present on K48. An N6,N6-dimethyllysine modification is found at K59. The residue at position 81 (R81) is a Dimethylated arginine. K87 is modified (N6-acetyllysine; alternate). Position 87 is an N6-lactoyllysine; alternate (K87). K87 is subject to N6,N6,N6-trimethyllysine; alternate. 2 positions are modified to omega-N-methylarginine: R88 and R94. K110 carries the post-translational modification N6-lactoyllysine; alternate. At K110 the chain carries N6-methyllysine. At T117 the chain carries Phosphothreonine. Residues K118 and K122 each carry the N6-lactoyllysine; alternate modification. N6-succinyllysine; alternate is present on residues K118 and K122. The residue at position 118 (K118) is an N6-methylated lysine; alternate. K122 is covalently cross-linked (Glycyl lysine isopeptide (Lys-Gly) (interchain with G-Cter in ubiquitin); alternate).

This sequence belongs to the histone H2B family. The nucleosome is a histone octamer containing two molecules each of H2A, H2B, H3 and H4 assembled in one H3-H4 heterotetramer and two H2A-H2B heterodimers. Interacts with H2AB1; preferentially dimerizes with H2AB1 to form nucleosomes. Monoubiquitination at Lys-36 by the MSL1/MSL2 dimer is required for histone H3 'Lys-4' (H3K4me) and 'Lys-79' (H3K79me) methylation and transcription activation at specific gene loci, such as HOXA9 and MEIS1 loci. Similarly, monoubiquitination of Lys-122 (H2BK120Ub) by the RNF20/40 complex gives a specific tag for epigenetic transcriptional activation and is also prerequisite for histone H3 'Lys-4' and 'Lys-79' methylation. It also functions cooperatively with the FACT dimer to stimulate elongation by RNA polymerase II. H2BK120Ub also acts as a regulator of mRNA splicing: deubiquitination by USP49 is required for efficient cotranscriptional splicing of a large set of exons. Post-translationally, crotonylation (Kcr) is specifically present in male germ cells and marks testis-specific genes in post-meiotic cells, including X-linked genes that escape sex chromosome inactivation in haploid cells. Crotonylation marks active promoters and enhancers and confers resistance to transcriptional repressors. It is also associated with post-meiotically activated genes on autosomes. In terms of processing, acetylated during spermatogenesis. Acetylated form is most abundant in spermatogonia compared to spermatocytes and round spermatids. Phosphorylated at Thr-117 in spermatogonia, spermatocytes and round spermatids. Post-translationally, methylated at Lys-118 in spermatogonia, spermatocytes and round spermatids. In terms of processing, lactylated in macrophages by EP300/P300 by using lactoyl-CoA directly derived from endogenous or exogenous lactate, leading to stimulates gene transcription. In terms of tissue distribution, mainly expressed in testis, and the corresponding protein is also present in mature sperm. Also present in metaphase oocytes (at protein level).

The protein localises to the nucleus. It localises to the chromosome. Variant histone specifically required to direct the transformation of dissociating nucleosomes to protamine in male germ cells. Entirely replaces classical histone H2B prior nucleosome to protamine transition and probably acts as a nucleosome dissociating factor that creates a more dynamic chromatin, facilitating the large-scale exchange of histones. In condensing spermatids, the heterodimer between H2AB1 and H2BC1/TH2B is loaded onto the nucleosomes and promotes loading of transition proteins (TNP1 and TNP2) onto the nucleosomes. Inclusion of the H2AB1-H2BC1/TH2B dimer into chromatin opens the nucleosomes, releasing the nucleosomal DNA ends and allowing the invasion of nucleosomes by transition proteins (TNP1 and TNP2). Then, transition proteins drive the recruitment and processing of protamines, which are responsible for histone eviction. Also expressed maternally and is present in the female pronucleus, suggesting a similar role in protamine replacement by nucleosomes at fertilization. Core component of nucleosome. Nucleosomes wrap and compact DNA into chromatin, limiting DNA accessibility to the cellular machineries which require DNA as a template. Histones thereby play a central role in transcription regulation, DNA repair, DNA replication and chromosomal stability. DNA accessibility is regulated via a complex set of post-translational modifications of histones, also called histone code, and nucleosome remodeling. This chain is Histone H2B type 1-A, found in Mus musculus (Mouse).